Consider the following 228-residue polypeptide: UPF0758 protein STER_1430 (228 aa).

Residues 103–225 (QIMSSQQVAR…YYSFREERED (123 aa)) enclose the MPN domain. Residues histidine 174, histidine 176, and aspartate 187 each coordinate Zn(2+). A JAMM motif motif is present at residues 174 to 187 (HNHPSGEAYPSRND).

Belongs to the UPF0758 family.

This Streptococcus thermophilus (strain ATCC BAA-491 / LMD-9) protein is UPF0758 protein STER_1430.